A 1020-amino-acid polypeptide reads, in one-letter code: Calcium-transporting ATPase 10, plasma membrane-type (1020 aa).

The Cytoplasmic portion of the chain corresponds to 1–175 (MESYLEENFG…FVWEALQDTT (175 aa)). Positions 21 to 32 (ALRRWRKLCGVV) are interaction with calmodulin. 2 helical membrane-spanning segments follow: residues 176–196 (LIILAVCAFVSLVVGIAMEGW) and 199–219 (GAHDGLGIVASILLVVFVTAT). At 220-263 (SDYRQSLQFKDLDKEKKKIQVQVTRNGFRQRLSIYDLLPGDVVH) the chain is on the cytoplasmic side. The next 2 membrane-spanning stretches (helical) occupy residues 264–284 (LAIGDQVPADGLFISGFSLLI) and 352–372 (GVATIIGKIGLFFAVITFIVL). The Cytoplasmic segment spans residues 373-400 (SQGLISKKYHEGLLLSWSGDDALEMLEH). The chain crosses the membrane as a helical span at residues 401-421 (FAIAVTIVVVAVPEGLPLAVT). The 4-aspartylphosphate intermediate role is filled by Asp-456. Mg(2+) contacts are provided by Asp-758 and Asp-762. A helical transmembrane segment spans residues 843–863 (LTAVQLLWVNMIMDTLGALAL). The Cytoplasmic segment spans residues 864 to 887 (ATEPPNDDLMKREPVGRTGKFITN). The next 2 membrane-spanning stretches (helical) occupy residues 888–907 (VMWRNILGQSFYQFIVMWYL) and 924–944 (VVLNTIIFNSFVFCQVFNEIS). Topologically, residues 945–961 (SREMEKINVLRGILKNY) are cytoplasmic. 2 helical membrane passes run 962–982 (VFLGVLTSTVVFQFIMVQFLG) and 995–1015 (WIASVLLGLIGMPISAIIKLL). At 1016 to 1020 (PVGSS) the chain is on the cytoplasmic side.

The protein belongs to the cation transport ATPase (P-type) (TC 3.A.3) family. Type IIB subfamily.

It localises to the membrane. The enzyme catalyses Ca(2+)(in) + ATP + H2O = Ca(2+)(out) + ADP + phosphate + H(+). With respect to regulation, activated by calmodulin. In terms of biological role, this magnesium-dependent enzyme catalyzes the hydrolysis of ATP coupled with the translocation of calcium from the cytosol out of the cell, into the endoplasmic reticulum, or into organelles. The chain is Calcium-transporting ATPase 10, plasma membrane-type from Oryza sativa subsp. japonica (Rice).